Here is an 84-residue protein sequence, read N- to C-terminus: NADH-ubiquinone oxidoreductase chain 4L (84 aa).

A run of 2 helical transmembrane segments spans residues 19 to 39 (ITLL…LIHI) and 50 to 70 (IFSL…LSIL).

Belongs to the complex I subunit 4L family.

The protein localises to the mitochondrion membrane. It carries out the reaction a ubiquinone + NADH + 5 H(+)(in) = a ubiquinol + NAD(+) + 4 H(+)(out). Functionally, core subunit of the mitochondrial membrane respiratory chain NADH dehydrogenase (Complex I) that is believed to belong to the minimal assembly required for catalysis. Complex I functions in the transfer of electrons from NADH to the respiratory chain. The immediate electron acceptor for the enzyme is believed to be ubiquinone. The protein is NADH-ubiquinone oxidoreductase chain 4L (NAD4L) of Candida albicans (strain SC5314 / ATCC MYA-2876) (Yeast).